The primary structure comprises 122 residues: Large ribosomal subunit protein uL14 (122 aa).

The protein belongs to the universal ribosomal protein uL14 family. Part of the 50S ribosomal subunit. Forms a cluster with proteins L3 and L19. In the 70S ribosome, L14 and L19 interact and together make contacts with the 16S rRNA in bridges B5 and B8.

In terms of biological role, binds to 23S rRNA. Forms part of two intersubunit bridges in the 70S ribosome. This chain is Large ribosomal subunit protein uL14, found in Corynebacterium efficiens (strain DSM 44549 / YS-314 / AJ 12310 / JCM 11189 / NBRC 100395).